The following is a 440-amino-acid chain: Ribulose bisphosphate carboxylase large chain (440 aa).

An N6,N6,N6-trimethyllysine modification is found at lysine 4. The substrate site is built by asparagine 113 and threonine 163. The active-site Proton acceptor is the lysine 165. Position 167 (lysine 167) interacts with substrate. Residues lysine 191, aspartate 193, and glutamate 194 each contribute to the Mg(2+) site. Lysine 191 carries the N6-carboxylysine modification. Histidine 284 functions as the Proton acceptor in the catalytic mechanism. Positions 285, 317, and 369 each coordinate substrate.

Belongs to the RuBisCO large chain family. Type I subfamily. As to quaternary structure, heterohexadecamer of 8 large chains and 8 small chains; disulfide-linked. The disulfide link is formed within the large subunit homodimers. It depends on Mg(2+) as a cofactor. Post-translationally, the disulfide bond which can form in the large chain dimeric partners within the hexadecamer appears to be associated with oxidative stress and protein turnover.

The protein localises to the plastid. The protein resides in the chloroplast. It carries out the reaction 2 (2R)-3-phosphoglycerate + 2 H(+) = D-ribulose 1,5-bisphosphate + CO2 + H2O. The catalysed reaction is D-ribulose 1,5-bisphosphate + O2 = 2-phosphoglycolate + (2R)-3-phosphoglycerate + 2 H(+). Its function is as follows. RuBisCO catalyzes two reactions: the carboxylation of D-ribulose 1,5-bisphosphate, the primary event in carbon dioxide fixation, as well as the oxidative fragmentation of the pentose substrate in the photorespiration process. Both reactions occur simultaneously and in competition at the same active site. This chain is Ribulose bisphosphate carboxylase large chain, found in Onoclea sensibilis (Sensitive fern).